The chain runs to 183 residues: Small ribosomal subunit protein uS4c (183 aa).

The S4 RNA-binding domain maps to 82–143 (MRLDNILFRL…KQRSKALIQN (62 aa)).

This sequence belongs to the universal ribosomal protein uS4 family. Part of the 30S ribosomal subunit. Contacts protein S5. The interaction surface between S4 and S5 is involved in control of translational fidelity.

Its subcellular location is the plastid. The protein resides in the chloroplast. In terms of biological role, one of the primary rRNA binding proteins, it binds directly to 16S rRNA where it nucleates assembly of the body of the 30S subunit. Functionally, with S5 and S12 plays an important role in translational accuracy. This Crocosmia sp. (strain Porto Alegre 034) protein is Small ribosomal subunit protein uS4c (rps4).